Reading from the N-terminus, the 349-residue chain is MAHQTGIHATPELKEFFAKARNGSIRLIKVVIEEEQLVLGSHKELKHAWEQDYDALIVPLLDESQPCYILYRLDSQNAQGYEWIFLSWSPDHSPVRLKMLYAATRATVKKEFGGGHIKDEIFGTLKEDVALSGYKKHVSLCAAPAPLTAAERELQEIKINEVKTEISVESKQQTLQGLSFPLRPEAEEAILLLKQKKINYIQLRLDLEKETVDLVHTKHTEIKDLPGRIPQDTARYHFFLYKHSHEGDHLESVVFIYSMPGYKCSIKERMLYSSCKNRLLDSVEQDFQLEIAKKIEIEDGAELTDEFLYDEVHPKQHAFKQAFAKPKGPAGKRGQKRLIKGPGENGEDS.

2 ADF-H domains span residues 4–139 and 177–313; these read QTGI…KHVS and GLSF…DEVH. Residues 321-349 are disordered; the sequence is QAFAKPKGPAGKRGQKRLIKGPGENGEDS.

It belongs to the actin-binding proteins ADF family. Twinfilin subfamily. In terms of assembly, interacts with G-actin; ADP-actin form and capping protein (CP).

The protein resides in the cytoplasm. The protein localises to the cytoskeleton. It is found in the perinuclear region. Its function is as follows. Actin-binding protein involved in motile and morphological processes. Inhibits actin polymerization, likely by sequestering G-actin. The chain is Twinfilin-2-A (twf2-a) from Xenopus laevis (African clawed frog).